The sequence spans 249 residues: General transcription factor IIF subunit 2 (249 aa).

Ala2 bears the N-acetylalanine mark. An N6-acetyllysine mark is found at Lys22, Lys33, and Lys137. Position 142 is a phosphoserine (Ser142). Positions 227 and 229 each coordinate DNA. Ser248 is modified (phosphoserine).

The protein belongs to the TFIIF beta subunit family. Heterodimer of an alpha and a beta subunit. Interacts with HTATSF1 and GPBP1. Interacts with URI1. Interacts with GTF2B (via N-terminus); this interaction is inhibited in presence of GTF2F1. Part of TBP-based Pol II pre-initiation complex (PIC), in which Pol II core assembles with general transcription factors and other specific initiation factors including GTF2E1, GTF2E2, GTF2F1, GTF2F2, TCEA1, ERCC2, ERCC3, GTF2H2, GTF2H3, GTF2H4, GTF2H5, GTF2A1, GTF2A2, GTF2B and TBP; this large multi-subunit PIC complex mediates DNA unwinding and targets Pol II core to the transcription start site where the first phosphodiester bond forms.

Its subcellular location is the nucleus. TFIIF is a general transcription initiation factor that binds to RNA polymerase II and helps to recruit it to the initiation complex in collaboration with TFIIB. It promotes transcription elongation. This Rattus norvegicus (Rat) protein is General transcription factor IIF subunit 2 (Gtf2f2).